A 325-amino-acid chain; its full sequence is Beta-ketoacyl-[acyl-carrier-protein] synthase III (325 aa).

Catalysis depends on residues cysteine 116 and histidine 252. Residues 253 to 257 form an ACP-binding region; the sequence is QANLR. Residue asparagine 282 is part of the active site.

This sequence belongs to the thiolase-like superfamily. FabH family. In terms of assembly, homodimer.

Its subcellular location is the cytoplasm. It carries out the reaction malonyl-[ACP] + acetyl-CoA + H(+) = 3-oxobutanoyl-[ACP] + CO2 + CoA. Its pathway is lipid metabolism; fatty acid biosynthesis. Functionally, catalyzes the condensation reaction of fatty acid synthesis by the addition to an acyl acceptor of two carbons from malonyl-ACP. Catalyzes the first condensation reaction which initiates fatty acid synthesis and may therefore play a role in governing the total rate of fatty acid production. Possesses both acetoacetyl-ACP synthase and acetyl transacylase activities. Its substrate specificity determines the biosynthesis of branched-chain and/or straight-chain of fatty acids. This Xanthomonas euvesicatoria pv. vesicatoria (strain 85-10) (Xanthomonas campestris pv. vesicatoria) protein is Beta-ketoacyl-[acyl-carrier-protein] synthase III.